A 603-amino-acid chain; its full sequence is Spastin (603 aa).

The disordered stretch occupies residues 1–34 (MNSPGGRNNKKKPVTPAAETGPGPPTPPPPPAET). The Cytoplasmic portion of the chain corresponds to 1–54 (MNSPGGRNNKKKPVTPAAETGPGPPTPPPPPAETQVLLAPPSLHKRNLYLFSYP). The span at 22-32 (PGPPTPPPPPA) shows a compositional bias: pro residues. An intramembrane region (helical) is located at residues 55 to 75 (LLAAFSLLRFLAFQLGLLFVW). The Cytoplasmic portion of the chain corresponds to 76–603 (FCERLSRRVM…WNKEFGDTTV (528 aa)). The MIT domain maps to 113–188 (YHQQAFQYIS…LMAKDRLQLL (76 aa)). Positions 216 to 294 (GLLKPEKGAV…RTNKPTTPTT (79 aa)) are disordered. Over residues 219-231 (KPEKGAVPKKKDP) the composition is skewed to basic and acidic residues. The segment covering 281–294 (KNNTRTNKPTTPTT) has biased composition (low complexity). An ATP-binding site is contributed by 369–376 (GPPGNGKT).

This sequence belongs to the AAA ATPase family. Spastin subfamily. In terms of assembly, homohexamer. The homohexamer is stabilized by ATP-binding. The homohexamer may adopt a ring conformation through which microtubules pass prior to being severed. Interacts with microtubules.

It localises to the membrane. Its subcellular location is the cytoplasm. The protein resides in the cytoskeleton. It is found in the microtubule organizing center. The protein localises to the centrosome. It localises to the perinuclear region. Its subcellular location is the nucleus. The enzyme catalyses n ATP + n H2O + a microtubule = n ADP + n phosphate + (n+1) alpha/beta tubulin heterodimers.. In terms of biological role, ATP-dependent microtubule severing protein that specifically recognizes and cuts microtubules that are polyglutamylated. Preferentially recognizes and acts on microtubules decorated with short polyglutamate tails: severing activity increases as the number of glutamates per tubulin rises from one to eight, but decreases beyond this glutamylation threshold. Microtubule severing promotes reorganization of cellular microtubule arrays and the release of microtubules from the centrosome following nucleation. Required for membrane traffic from the endoplasmic reticulum (ER) to the Golgi and for completion of the abscission stage of cytokinesis. Also plays a role in axon growth and the formation of axonal branches. The protein is Spastin of Xenopus tropicalis (Western clawed frog).